A 132-amino-acid polypeptide reads, in one-letter code: Small ribosomal subunit protein uS11 (132 aa).

Belongs to the universal ribosomal protein uS11 family. As to quaternary structure, part of the 30S ribosomal subunit. Interacts with proteins S7 and S18. Binds to IF-3.

Its function is as follows. Located on the platform of the 30S subunit, it bridges several disparate RNA helices of the 16S rRNA. Forms part of the Shine-Dalgarno cleft in the 70S ribosome. The chain is Small ribosomal subunit protein uS11 from Chlamydia trachomatis serovar D (strain ATCC VR-885 / DSM 19411 / UW-3/Cx).